A 495-amino-acid chain; its full sequence is Probable cobyric acid synthase (495 aa).

Residues 256 to 441 (DVDIAVIRLT…LHGLFDNVNI (186 aa)) form the GATase cobBQ-type domain. Cys-334 functions as the Nucleophile in the catalytic mechanism. The active site involves His-433.

The protein belongs to the CobB/CobQ family. CobQ subfamily.

The protein operates within cofactor biosynthesis; adenosylcobalamin biosynthesis. Functionally, catalyzes amidations at positions B, D, E, and G on adenosylcobyrinic A,C-diamide. NH(2) groups are provided by glutamine, and one molecule of ATP is hydrogenolyzed for each amidation. This Methanococcoides burtonii (strain DSM 6242 / NBRC 107633 / OCM 468 / ACE-M) protein is Probable cobyric acid synthase.